Consider the following 208-residue polypeptide: Coiled-coil domain-containing protein 25 (208 aa).

Topologically, residues 1–105 are extracellular; that stretch reads MVFYFTSSSV…SNLKKTADMD (105 aa). The DNA-binding stretch occupies residues 21-25; it reads KDKYE. Lysine 23 carries the post-translational modification N6-acetyllysine. Residues 106–122 traverse the membrane as a helical segment; it reads VGQIGFHRQKDVKIVTV. Residues 117 to 187 adopt a coiled-coil conformation; it reads VKIVTVEKKV…REMDELRSYS (71 aa). The Cytoplasmic segment spans residues 123–208; it reads EKKVNEILNR…QDGNDSDEFM (86 aa). Over residues 144–184 the composition is skewed to basic and acidic residues; it reads LAAEKEGRDREERNEKKAQIQEMKRKEKEEMKKKREMDELR. The segment at 144 to 208 is disordered; the sequence is LAAEKEGRDR…QDGNDSDEFM (65 aa). Serine 204 is modified (phosphoserine).

It belongs to the CCDC25 family. Interacts (via cytoplasmic region) with ILK.

It is found in the cell membrane. Its subcellular location is the endomembrane system. Transmembrane receptor that senses neutrophil extracellular traps (NETs) and triggers the ILK-PARVB pathway to enhance cell motility. NETs are mainly composed of DNA fibers and are released by neutrophils to bind pathogens during inflammation. Formation of NETs is also associated with cancer metastasis, NET-DNA acting as a chemotactic factor to attract cancer cells. Specifically binds NETs on its extracellular region, in particular the 8-OHdG-enriched DNA present in NETs, and recruits ILK, initiating the ILK-PARVB cascade to induce cytoskeleton rearrangement and directional migration of cells. In the context of cancer, promotes cancer metastasis by sensing NETs and promoting migration of tumor cells. The protein is Coiled-coil domain-containing protein 25 of Mus musculus (Mouse).